The sequence spans 259 residues: Type III pantothenate kinase (259 aa).

6–13 serves as a coordination point for ATP; sequence DCGNTNTV. 107–110 serves as a coordination point for substrate; the sequence is GPDR. D109 functions as the Proton acceptor in the catalytic mechanism. D129 contacts K(+). T132 is an ATP binding site. T184 provides a ligand contact to substrate.

Belongs to the type III pantothenate kinase family. Homodimer. It depends on NH4(+) as a cofactor. Requires K(+) as cofactor.

The protein localises to the cytoplasm. The catalysed reaction is (R)-pantothenate + ATP = (R)-4'-phosphopantothenate + ADP + H(+). Its pathway is cofactor biosynthesis; coenzyme A biosynthesis; CoA from (R)-pantothenate: step 1/5. Catalyzes the phosphorylation of pantothenate (Pan), the first step in CoA biosynthesis. This Jannaschia sp. (strain CCS1) protein is Type III pantothenate kinase.